A 99-amino-acid polypeptide reads, in one-letter code: Phosphoribosyl-ATP pyrophosphatase (99 aa).

The protein belongs to the PRA-PH family.

It localises to the cytoplasm. The enzyme catalyses 1-(5-phospho-beta-D-ribosyl)-ATP + H2O = 1-(5-phospho-beta-D-ribosyl)-5'-AMP + diphosphate + H(+). It participates in amino-acid biosynthesis; L-histidine biosynthesis; L-histidine from 5-phospho-alpha-D-ribose 1-diphosphate: step 2/9. The chain is Phosphoribosyl-ATP pyrophosphatase from Methanococcoides burtonii (strain DSM 6242 / NBRC 107633 / OCM 468 / ACE-M).